Consider the following 448-residue polypeptide: tRNA(Ile)-lysidine synthase (448 aa).

27–32 (SGGVDS) is an ATP binding site.

Belongs to the tRNA(Ile)-lysidine synthase family.

The protein localises to the cytoplasm. The enzyme catalyses cytidine(34) in tRNA(Ile2) + L-lysine + ATP = lysidine(34) in tRNA(Ile2) + AMP + diphosphate + H(+). Functionally, ligates lysine onto the cytidine present at position 34 of the AUA codon-specific tRNA(Ile) that contains the anticodon CAU, in an ATP-dependent manner. Cytidine is converted to lysidine, thus changing the amino acid specificity of the tRNA from methionine to isoleucine. The protein is tRNA(Ile)-lysidine synthase of Vibrio campbellii (strain ATCC BAA-1116).